Reading from the N-terminus, the 424-residue chain is Isovaleryl-CoA dehydrogenase, mitochondrial (424 aa).

The transit peptide at 1–30 directs the protein to the mitochondrion; that stretch reads MATAVRLLGRRVSSWRLRPLPSPLAVPQRA. N6-acetyllysine; alternate is present on residues K56, K65, and K76. An N6-succinyllysine; alternate mark is found at K56, K65, and K76. Residues 163–172 and 196–198 contribute to the FAD site; these read LAMSEPNAGS and WIT. S172 lines the substrate pocket. 220 to 221 serves as a coordination point for substrate; that stretch reads SR. Residue K239 is modified to N6-acetyllysine. K260 is modified (N6-acetyllysine; alternate). K260 is subject to N6-succinyllysine; alternate. Substrate is bound by residues Y275 and 282 to 285; that span reads DLER. E284 (proton acceptor) is an active-site residue. R310 contacts FAD. K316 is modified (N6-succinyllysine). FAD is bound by residues Q321 and 378-382; that span reads QCLGG. 405-406 is a binding site for substrate; sequence GG. 407–409 provides a ligand contact to FAD; sequence TSE.

Belongs to the acyl-CoA dehydrogenase family. In terms of assembly, homotetramer. FAD serves as cofactor.

It localises to the mitochondrion matrix. The catalysed reaction is 3-methylbutanoyl-CoA + oxidized [electron-transfer flavoprotein] + H(+) = 3-methylbut-2-enoyl-CoA + reduced [electron-transfer flavoprotein]. It carries out the reaction pentanoyl-CoA + oxidized [electron-transfer flavoprotein] + H(+) = (2E)-pentenoyl-CoA + reduced [electron-transfer flavoprotein]. It catalyses the reaction hexanoyl-CoA + oxidized [electron-transfer flavoprotein] + H(+) = (2E)-hexenoyl-CoA + reduced [electron-transfer flavoprotein]. The enzyme catalyses butanoyl-CoA + oxidized [electron-transfer flavoprotein] + H(+) = (2E)-butenoyl-CoA + reduced [electron-transfer flavoprotein]. It participates in amino-acid degradation; L-leucine degradation; (S)-3-hydroxy-3-methylglutaryl-CoA from 3-isovaleryl-CoA: step 1/3. Catalyzes the conversion of isovaleryl-CoA/3-methylbutanoyl-CoA to 3-methylbut-2-enoyl-CoA as an intermediate step in the leucine (Leu) catabolic pathway. To a lesser extent, is also able to catalyze the oxidation of other saturated short-chain acyl-CoA thioesters as pentanoyl-CoA, hexenoyl-CoA and butenoyl-CoA. In Rattus norvegicus (Rat), this protein is Isovaleryl-CoA dehydrogenase, mitochondrial (Ivd).